Consider the following 1127-residue polypeptide: Disease resistance protein RPS6 (1127 aa).

Position 1 is an N-acetylmethionine (methionine 1). Positions 12 to 176 (WSYHVFPSFS…EIANDILGKM (165 aa)) constitute a TIR domain. The active site involves glutamate 87. The NB-ARC domain occupies 191-452 (EDHITKMSSL…HIACIFNGEK (262 aa)). 11 LRR repeats span residues 197-221 (MSSL…GIGK), 540-563 (IDET…LFLK), 587-609 (PSRL…NFHP), 610-632 (ENLV…VHSL), 633-656 (AGLR…SMAT), 658-679 (LETL…IQYL), 680-704 (NKLN…NLKS), 766-790 (SPTL…IQNL), 791-813 (YQLE…GINL), 814-834 (DSLI…PDIS), and 835-857 (TNIS…IEKL).

As to quaternary structure, interacts with EDS1. In terms of tissue distribution, ubiquitous.

The enzyme catalyses NAD(+) + H2O = ADP-D-ribose + nicotinamide + H(+). Its function is as follows. Disease resistance (R) protein that specifically recognizes the hopA1 type III effector avirulence protein from Pseudomonas syringae. Resistance proteins guard the plant against pathogens that contain an appropriate avirulence protein via an indirect interaction with this avirulence protein. That triggers a defense system including the hypersensitive response, which restricts the pathogen growth. The sequence is that of Disease resistance protein RPS6 (RPS6) from Arabidopsis thaliana (Mouse-ear cress).